We begin with the raw amino-acid sequence, 1133 residues long: Envelopment polyprotein (1133 aa).

Residues 1 to 16 form the signal peptide; sequence MWSLLLLAALVGQGFA. Topologically, residues 17 to 484 are lumenal; the sequence is LKNVFDMRIQ…PGFHGWATAA (468 aa). 10 disulfides stabilise this stretch: C61/C155, C107/C126, C131/C136, C173/C183, C208/C245, C232/C349, C374/C433, C378/C387, C403/C422, and C450/C473. Residue N132 is glycosylated (N-linked (GlcNAc...) asparagine; by host). N-linked (GlcNAc...) asparagine; by host glycans are attached at residues N233 and N345. N397 is a glycosylation site (N-linked (GlcNAc...) asparagine; by host). A helical membrane pass occupies residues 485–504; the sequence is LLITFCFGWVLIPACTLAIL. Residues 505–626 lie on the Cytoplasmic side of the membrane; the sequence is LVLKFFANIL…NLFRYKSRCY (122 aa). Positions 514–531 are binding to the ribonucleoprotein; that stretch reads LHTSNQENRFKAILRKIK. CCHC-type zinc fingers lie at residues 543 to 563 and 568 to 589; these read CEIC…NLSC and CPYC…YKVC. Binding to the ribonucleoprotein regions lie at residues 586–603, 590–601, and 609–623; these read YKVC…KKTV, QATHRFREDLKK, and GPGC…RYKS. Residues 609–632 form the ITAM domain; that stretch reads GPGCYRTLNLFRYKSRCYILTMWT. The short motif at 613-616 is the YxxL element; sequence YRTL. A helical transmembrane segment spans residues 627–647; the sequence is ILTMWTLLLIIESILWAASAA. At 648–1105 the chain is on the lumenal side; it reads EIPLVPLWTD…VMGIINGNWV (458 aa). 8 cysteine pairs are disulfide-bonded: C733–C768, C737–C775, C749–C883, C763–C894, C778–C902, C804–C813, C821–C830, and C861–C865. Residues 755–775 are fusion loop; it reads YEYENSWACNPPDCPGVGTGC. N-linked (GlcNAc...) asparagine; by host glycosylation is present at N926. Disulfide bonds link C968–C998, C991–C1043, C1008–C1013, C1044–C1049, and C1083–C1087. The helical transmembrane segment at 1106–1125 threads the bilayer; it reads VLIVLCVLLLFSLILLSILC. The segment at 1120–1133 is binding to the ribonucleoprotein; that stretch reads LLSILCPVRKHKKS. At 1126 to 1133 the chain is on the cytoplasmic side; that stretch reads PVRKHKKS.

Belongs to the hantavirus envelope glycoprotein family. As to quaternary structure, homodimer. Homotetramer; forms heterotetrameric Gn-Gc spikes in the pre-fusion conformation. Interacts (via C-terminus) with the nucleoprotein. Interacts with host TUFM; this interaction contributes to the virus-induced degradation of mitochondria by autophagy, which leads to degradation of host MAVS and inhibition of type I interferon (IFN) responses. Interacts with host MAP1LC3B; this interaction contributes to the virus-induced degradation of mitochondria by autophagy, which leads to degradation of host MAVS and inhibition of type I interferon (IFN) responses. Homodimer. Homotetramer; forms heterotetrameric Gn-Gc spikes in the pre-fusion conformation. Homotrimer; forms homotrimer in the post-fusion conformation at acidic pH. Interacts (via C-terminus) with the nucleoprotein. In terms of processing, envelope polyprotein precursor is quickly cleaved in vivo just after synthesis, presumably by host signal peptidase.

The protein resides in the virion membrane. It is found in the host cell surface. Its subcellular location is the host Golgi apparatus membrane. The protein localises to the host endoplasmic reticulum membrane. It localises to the host mitochondrion. Functionally, forms homotetramers with glycoprotein C at the surface of the virion. Attaches the virion to host cell receptors including integrin ITGAV/ITGB3. This attachment induces virion internalization predominantly through clathrin-dependent endocytosis. Mediates the assembly and budding of infectious virus particles through its interaction with the nucleocapsid protein and the viral genome. May dysregulate normal immune and endothelial cell responses through an ITAM motif. Translocates to mitochondria, binds to host TUFM and recruits MAP1LC3B. These interactions induce mitochondrial autophagy and therefore destruction of host MAVS leading to inhibition of type I interferon (IFN) responses. Concomitant breakdown of glycoprotein N is apparently prevented by the nucleoprotein that may inhibit Gn-stimulated autophagosome-lysosome fusion. Interacts with the viral genomic RNA. Its function is as follows. Forms homotetramers with glycoprotein N at the surface of the virion. Attaches the virion to host cell receptors including integrin ITGAV/ITGB3. This attachment induces virion internalization predominantly through clathrin-dependent endocytosis. Class II fusion protein that promotes fusion of viral membrane with host endosomal membrane after endocytosis of the virion. The chain is Envelopment polyprotein (GP) from Homo sapiens (Human).